Here is a 117-residue protein sequence, read N- to C-terminus: Large ribosomal subunit protein bL17 (117 aa).

Belongs to the bacterial ribosomal protein bL17 family. In terms of assembly, part of the 50S ribosomal subunit. Contacts protein L32.

This chain is Large ribosomal subunit protein bL17, found in Exiguobacterium sp. (strain ATCC BAA-1283 / AT1b).